A 623-amino-acid polypeptide reads, in one-letter code: Low affinity potassium transport system protein Kup (623 aa).

A run of 12 helical transmembrane segments spans residues L9–L29, V49–L69, V101–P121, P137–I157, G163–L183, A212–Y232, W247–L267, P276–A296, I337–F357, L363–A383, I395–N415, and L419–T439.

This sequence belongs to the HAK/KUP transporter (TC 2.A.72) family.

The protein resides in the cell inner membrane. It carries out the reaction K(+)(in) + H(+)(in) = K(+)(out) + H(+)(out). Responsible for the low-affinity transport of potassium into the cell. Likely operates as a K(+):H(+) symporter. This Cronobacter sakazakii (strain ATCC BAA-894) (Enterobacter sakazakii) protein is Low affinity potassium transport system protein Kup.